The chain runs to 259 residues: UPF0246 protein PLES_14941 (259 aa).

The protein belongs to the UPF0246 family.

This is UPF0246 protein PLES_14941 from Pseudomonas aeruginosa (strain LESB58).